The primary structure comprises 226 residues: Phosphoglycolate phosphatase (226 aa).

Asp-9 serves as the catalytic Nucleophile. The Mg(2+) site is built by Asp-9 and Asp-11. Residue Lys-150 participates in substrate binding. The Mg(2+) site is built by Asp-173 and Asp-177.

This sequence belongs to the archaeal SPP-like hydrolase family. Mg(2+) serves as cofactor.

The catalysed reaction is 2-phosphoglycolate + H2O = glycolate + phosphate. Catalyzes the dephosphorylation of 2-phosphoglycolate. This is Phosphoglycolate phosphatase from Methanosarcina mazei (strain ATCC BAA-159 / DSM 3647 / Goe1 / Go1 / JCM 11833 / OCM 88) (Methanosarcina frisia).